We begin with the raw amino-acid sequence, 214 residues long: Ion-translocating oxidoreductase complex subunit G (214 aa).

Residues 13–33 (ALLLGLFALVGVGLVALVQQF) form a helical membrane-spanning segment. The residue at position 180 (Thr180) is an FMN phosphoryl threonine.

Belongs to the RnfG family. The complex is composed of six subunits: RnfA, RnfB, RnfC, RnfD, RnfE and RnfG. Requires FMN as cofactor.

It localises to the cell inner membrane. Its function is as follows. Part of a membrane-bound complex that couples electron transfer with translocation of ions across the membrane. This Pseudomonas aeruginosa (strain UCBPP-PA14) protein is Ion-translocating oxidoreductase complex subunit G.